The chain runs to 272 residues: Prohibitin 1 (272 aa).

Residues 177 to 211 adopt a coiled-coil conformation; it reads KEFTEAVEMKQVAQQEAERARFIVEKAEQQKKAAV.

The mitochondrial prohibitin complex consists of two subunits (PHB1 and PHB2), assembled into a membrane-associated ring-shaped supercomplex of approximately 1 mDa.

The protein localises to the mitochondrion inner membrane. It localises to the nucleus. It is found in the cytoplasm. The protein resides in the cell membrane. Its function is as follows. Protein with pleiotropic attributes mediated in a cell-compartment- and tissue-specific manner, which include the plasma membrane-associated cell signaling functions, mitochondrial chaperone, and transcriptional co-regulator of transcription factors in the nucleus. Functionally, in the mitochondria, together with PHB2, forms large ring complexes (prohibitin complexes) in the inner mitochondrial membrane (IMM) and functions as a chaperone protein that stabilizes mitochondrial respiratory enzymes and maintains mitochondrial integrity in the IMM, which is required for mitochondrial morphogenesis, neuronal survival, and normal lifespan. In the nucleus, acts as a transcription coregulator, enhances promoter binding by TP53, a transcription factor it activates, but reduces the promoter binding by E2F1, a transcription factor it represses. In terms of biological role, in the plasma membrane, cooperates with CD86 to mediate CD86-signaling in B lymphocytes that regulates the level of IgG1 produced through the activation of distal signaling intermediates. Upon CD40 engagement, required to activate NF-kappa-B signaling pathway via phospholipase C and protein kinase C activation. In Gallus gallus (Chicken), this protein is Prohibitin 1 (PHB1).